The following is a 347-amino-acid chain: tRNA N6-adenosine threonylcarbamoyltransferase (347 aa).

Fe cation contacts are provided by histidine 113 and histidine 117. Substrate is bound by residues 136 to 140 (IVSGG), aspartate 170, glycine 183, aspartate 187, and asparagine 282. Aspartate 310 lines the Fe cation pocket.

The protein belongs to the KAE1 / TsaD family. It depends on Fe(2+) as a cofactor.

The protein localises to the cytoplasm. It catalyses the reaction L-threonylcarbamoyladenylate + adenosine(37) in tRNA = N(6)-L-threonylcarbamoyladenosine(37) in tRNA + AMP + H(+). Required for the formation of a threonylcarbamoyl group on adenosine at position 37 (t(6)A37) in tRNAs that read codons beginning with adenine. Is involved in the transfer of the threonylcarbamoyl moiety of threonylcarbamoyl-AMP (TC-AMP) to the N6 group of A37, together with TsaE and TsaB. TsaD likely plays a direct catalytic role in this reaction. The protein is tRNA N6-adenosine threonylcarbamoyltransferase of Bifidobacterium longum (strain NCC 2705).